A 604-amino-acid chain; its full sequence is Elongation factor 4 (604 aa).

The tr-type G domain occupies 7-189 (SRLRNFCIIA…AVVDRIPPPA (183 aa)). Residues 19 to 24 (DHGKST) and 136 to 139 (NKID) each bind GTP.

The protein belongs to the TRAFAC class translation factor GTPase superfamily. Classic translation factor GTPase family. LepA subfamily.

It is found in the cell inner membrane. The enzyme catalyses GTP + H2O = GDP + phosphate + H(+). Functionally, required for accurate and efficient protein synthesis under certain stress conditions. May act as a fidelity factor of the translation reaction, by catalyzing a one-codon backward translocation of tRNAs on improperly translocated ribosomes. Back-translocation proceeds from a post-translocation (POST) complex to a pre-translocation (PRE) complex, thus giving elongation factor G a second chance to translocate the tRNAs correctly. Binds to ribosomes in a GTP-dependent manner. This chain is Elongation factor 4, found in Prochlorococcus marinus (strain MIT 9303).